A 144-amino-acid chain; its full sequence is Ribosomal RNA large subunit methyltransferase H (144 aa).

Residues leucine 63, glycine 92, and 111-116 (LSPLTF) contribute to the S-adenosyl-L-methionine site.

The protein belongs to the RNA methyltransferase RlmH family. Homodimer.

It localises to the cytoplasm. The enzyme catalyses pseudouridine(1915) in 23S rRNA + S-adenosyl-L-methionine = N(3)-methylpseudouridine(1915) in 23S rRNA + S-adenosyl-L-homocysteine + H(+). Specifically methylates the pseudouridine at position 1915 (m3Psi1915) in 23S rRNA. The protein is Ribosomal RNA large subunit methyltransferase H of Synechococcus sp. (strain CC9902).